The sequence spans 655 residues: Methylenetetrahydrofolate reductase (NADPH) (655 aa).

Residues 1-39 (MVNEPRGNGSPGPRWEGSSSGSESSRTSSRCSTPGLDPE) are disordered. Phosphoserine occurs at positions 10, 18, 19, 20, 22, 24, 25, 28, and 29. Over residues 11–35 (PGPRWEGSSSGSESSRTSSRCSTPG) the composition is skewed to low complexity. Threonine 33 carries the post-translational modification Phosphothreonine. Residue glutamate 62 is the Proton donor/acceptor of the active site. NAD(+) is bound by residues 62-67 (EFFPPR) and 93-94 (TW). Threonine 93 is subject to Phosphothreonine. 93–94 (TW) lines the FAD pocket. The residue at position 102 (serine 102) is a Phosphoserine. FAD contacts are provided by residues histidine 126, 156-158 (RGD), 173-174 (YA), tyrosine 196, 200-203 (HPEG), aspartate 209, and lysine 216. Aspartate 158 is a binding site for substrate. 3 residues coordinate substrate: glutamine 227, tyrosine 320, and arginine 324. At serine 393 the chain carries Phosphoserine. Residue threonine 450 is modified to Phosphothreonine. Residues asparagine 455, 460–463 (AAET), 480–484 (TINSQ), threonine 559, and threonine 572 contribute to the S-adenosyl-L-methionine site.

Belongs to the methylenetetrahydrofolate reductase family. In terms of assembly, homodimer. It depends on FAD as a cofactor. Phosphorylation of an N-terminal serine-rich phosphorylation region increases sensitivity to S-adenosylmethionine and inhibition.

The enzyme catalyses (6S)-5-methyl-5,6,7,8-tetrahydrofolate + NADP(+) = (6R)-5,10-methylene-5,6,7,8-tetrahydrofolate + NADPH + H(+). Its pathway is one-carbon metabolism; tetrahydrofolate interconversion. Allosterically regulated by S-adenosylmethionine (SAM). Functionally, catalyzes the conversion of 5,10-methylenetetrahydrofolate to 5-methyltetrahydrofolate, a cosubstrate for homocysteine remethylation to methionine. Represents a key regulatory connection between the folate and methionine cycles. This chain is Methylenetetrahydrofolate reductase (NADPH) (MTHFR), found in Bos taurus (Bovine).